A 368-amino-acid polypeptide reads, in one-letter code: Ribosomal RNA large subunit methyltransferase M (368 aa).

S-adenosyl-L-methionine contacts are provided by residues Ser192, 225–228, Asp244, Asp264, and Asp281; that span reads APGG. Catalysis depends on Lys310, which acts as the Proton acceptor.

The protein belongs to the class I-like SAM-binding methyltransferase superfamily. RNA methyltransferase RlmE family. RlmM subfamily. As to quaternary structure, monomer.

The protein resides in the cytoplasm. The catalysed reaction is cytidine(2498) in 23S rRNA + S-adenosyl-L-methionine = 2'-O-methylcytidine(2498) in 23S rRNA + S-adenosyl-L-homocysteine + H(+). In terms of biological role, catalyzes the 2'-O-methylation at nucleotide C2498 in 23S rRNA. In Colwellia psychrerythraea (strain 34H / ATCC BAA-681) (Vibrio psychroerythus), this protein is Ribosomal RNA large subunit methyltransferase M.